Reading from the N-terminus, the 356-residue chain is Biotin synthase (356 aa).

Residues 51-270 (NKVQCNQLLN…IALARIMMPL (220 aa)) enclose the Radical SAM core domain. [4Fe-4S] cluster is bound by residues C66, C70, and C73. Residues C110, C141, C201, and R274 each contribute to the [2Fe-2S] cluster site. Residues 310 to 356 (PGDNKDRSLFDRLGLEPRDDHGVHEHSSHSHTHDQGHDHGPHGHSHG) form a disordered region. The segment covering 312–350 (DNKDRSLFDRLGLEPRDDHGVHEHSSHSHTHDQGHDHGP) has biased composition (basic and acidic residues).

It belongs to the radical SAM superfamily. Biotin synthase family. As to quaternary structure, homodimer. Requires [4Fe-4S] cluster as cofactor. [2Fe-2S] cluster serves as cofactor.

The enzyme catalyses (4R,5S)-dethiobiotin + (sulfur carrier)-SH + 2 reduced [2Fe-2S]-[ferredoxin] + 2 S-adenosyl-L-methionine = (sulfur carrier)-H + biotin + 2 5'-deoxyadenosine + 2 L-methionine + 2 oxidized [2Fe-2S]-[ferredoxin]. It participates in cofactor biosynthesis; biotin biosynthesis; biotin from 7,8-diaminononanoate: step 2/2. In terms of biological role, catalyzes the conversion of dethiobiotin (DTB) to biotin by the insertion of a sulfur atom into dethiobiotin via a radical-based mechanism. The sequence is that of Biotin synthase from Rhodopseudomonas palustris (strain BisB18).